The sequence spans 544 residues: CRISPR-associated endodeoxyribonuclease Cas12f2 (544 aa).

The recognition domain (REC) stretch occupies residues 1–195; it reads MNMSKTTISV…KPNERETRYV (195 aa). The wedge domain (WED) stretch occupies residues 196 to 326; it reads HISKLESPSK…YLQYTYEAEV (131 aa). Residues 327–334 form a linker region; the sequence is EANKEYAG. Positions 335 to 485 are ruvC-I; sequence CLGVDIGCSK…VYVKPDYTSQ (151 aa). Residues aspartate 339 and glutamate 430 contribute to the active site. A target nucleic acid-binding (TNB) region spans residues 486 to 520; sequence TCSSCGADKEKTERPSQAIFRCLNPTCRYYQRDIN. The Zn(2+) site is built by cysteine 487, cysteine 490, cysteine 507, and cysteine 512. Residues 521–541 are ruvC-II; sequence ADFNAAVNIAKKALNNTEVVT. Residue aspartate 522 is part of the active site.

Belongs to the CRISPR-associated endonuclease Cas12f family. As to quaternary structure, an asymmetric homodimer. Guide RNA is probably required for dimerization. Requires Mg(2+) as cofactor. Zn(2+) is required as a cofactor.

CRISPR (clustered regularly interspaced short palindromic repeat), is an adaptive immune system that provides protection against mobile genetic elements (viruses, transposable elements and conjugative plasmids). CRISPR clusters contain sequences complementary to antecedent mobile elements and target invading nucleic acids. CRISPR clusters are transcribed and processed into CRISPR RNA (crRNA), which requires a trans-encoded small RNA (tracrRNA), but not this protein (in vitro). Recognizes a short motif in the CRISPR repeat sequences (the 5' PAM or protospacer adjacent motif, TTAT in this organism) to help distinguish self versus nonself, as targets within the CRISPR locus do not have PAMs. Upon expression in E.coli of this protein, a mini CRISPR array and the probable tracrRNA, has dsDNA endonuclease activity. DNA cleavage is centered around positions 21 base pairs 3' of PAM. The mini system does not protect E.coli against transformation by foreign plasmids. This Micrarchaeota archaeon (strain CG1_02_47_40) protein is CRISPR-associated endodeoxyribonuclease Cas12f2.